Consider the following 2661-residue polypeptide: 3-methylorcinaldehyde synthase tropA (2661 aa).

Residues 14 to 271 are N-terminal acylcarrier protein transacylase domain (SAT); sequence LLFGSQSLSF…HWSGHEAEVD (258 aa). The region spanning 380 to 796 is the Ketosynthase family 3 (KS3) domain; the sequence is GDDIAIVGAS…GSNASMVITQ (417 aa). Catalysis depends on for beta-ketoacyl synthase activity residues cysteine 545, histidine 680, and histidine 719. The malonyl-CoA:ACP transacylase (MAT) domain stretch occupies residues 901–1211; it reads LCFGGQVSTF…QAMSITTDKG (311 aa). Serine 988 (for acyl/malonyl transferase activity) is an active-site residue. Positions 1283 to 1425 are N-terminal hotdog fold; that stretch reads PDTILSFVGY…GTLVVVPMED (143 aa). Residues 1283-1600 enclose the PKS/mFAS DH domain; that stretch reads PDTILSFVGY…FVRIPRKGLA (318 aa). The interval 1288 to 1599 is product template (PT) domain; that stretch reads SFVGYQDSNK…QFVRIPRKGL (312 aa). Histidine 1318 acts as the Proton acceptor; for dehydratase activity in catalysis. The segment at 1453–1600 is C-terminal hotdog fold; that stretch reads AEEILQGRTI…FVRIPRKGLA (148 aa). The active-site Proton donor; for dehydratase activity is the aspartate 1509. The segment at 1614–1656 is disordered; that stretch reads ATNAQSRAIPPPSTNTTQSSSQQTPIPKAAAPKKEKKRPGNPK. Over residues 1627–1643 the composition is skewed to low complexity; that stretch reads TNTTQSSSQQTPIPKAA. The Carrier 1 domain maps to 1654 to 1731; sequence NPKLDVLPKL…QLVRVVESIV (78 aa). An O-(pantetheine 4'-phosphoryl)serine modification is found at serine 1691. Positions 1734-1762 are disordered; it reads EGSETSNLSSDDDDENGTPSTPETDLSDA. A Carrier 2 domain is found at 1764-1841; the sequence is VDAVVDNAEL…DLRQTAPGAA (78 aa). O-(pantetheine 4'-phosphoryl)serine is present on serine 1801. A methyltransferase (CMeT) domain region spans residues 1998–2231; that stretch reads QYQNVNELIF…GFGRVDWSDG (234 aa). Positions 2271-2659 are thioesterase (TE) domain; the sequence is GVDLLSPAIR…FISYWRSISF (389 aa).

It participates in secondary metabolite biosynthesis. In terms of biological role, non-reducing polyketide synthase; part of the gene cluster that mediates the biosynthesis of the tropolone class of fungal maleic anhydrides. The pathway begins with the synthesis of 3-methylorcinaldehyde by the non-reducing polyketide synthase (PKS) tropA. 3-methylorcinaldehyde is the substrate for the FAD-dependent monooxygenase tropB to yield a dearomatized hydroxycyclohexadione. The 2-oxoglutarate-dependent dioxygenase tropC then performs the oxidative ring expansion to provide the first tropolone metabolite stipitaldehyde. Trop D converts stipitaldehyde into stipitacetal which is in turn converted to stipitalide by the short-chain dehydrogenase/reductase tropE. The next steps involve tropF, tropG, tropH, tropI and tropJ to form successive tropolone maleic anhydrides including stipitaldehydic, stipitatonic and stipitatic acids. The polypeptide is 3-methylorcinaldehyde synthase tropA (Talaromyces stipitatus (strain ATCC 10500 / CBS 375.48 / QM 6759 / NRRL 1006) (Penicillium stipitatum)).